The following is a 449-amino-acid chain: NADP-specific glutamate dehydrogenase (449 aa).

The active site involves Lys125.

It belongs to the Glu/Leu/Phe/Val dehydrogenases family. As to quaternary structure, homohexamer.

The enzyme catalyses L-glutamate + NADP(+) + H2O = 2-oxoglutarate + NH4(+) + NADPH + H(+). The polypeptide is NADP-specific glutamate dehydrogenase (Giardia intestinalis (Giardia lamblia)).